We begin with the raw amino-acid sequence, 252 residues long: Trans-aconitate 2-methyltransferase (252 aa).

This sequence belongs to the methyltransferase superfamily. Tam family.

It is found in the cytoplasm. It carries out the reaction trans-aconitate + S-adenosyl-L-methionine = (E)-3-(methoxycarbonyl)pent-2-enedioate + S-adenosyl-L-homocysteine. Functionally, catalyzes the S-adenosylmethionine monomethyl esterification of trans-aconitate. This is Trans-aconitate 2-methyltransferase from Shigella dysenteriae serotype 1 (strain Sd197).